The primary structure comprises 376 residues: Succinyl-diaminopimelate desuccinylase (376 aa).

Residue histidine 67 coordinates Zn(2+). Aspartate 69 is an active-site residue. A Zn(2+)-binding site is contributed by aspartate 100. The active-site Proton acceptor is the glutamate 134. The Zn(2+) site is built by glutamate 135, glutamate 163, and histidine 349.

Belongs to the peptidase M20A family. DapE subfamily. In terms of assembly, homodimer. Zn(2+) serves as cofactor. It depends on Co(2+) as a cofactor.

It carries out the reaction N-succinyl-(2S,6S)-2,6-diaminopimelate + H2O = (2S,6S)-2,6-diaminopimelate + succinate. It participates in amino-acid biosynthesis; L-lysine biosynthesis via DAP pathway; LL-2,6-diaminopimelate from (S)-tetrahydrodipicolinate (succinylase route): step 3/3. In terms of biological role, catalyzes the hydrolysis of N-succinyl-L,L-diaminopimelic acid (SDAP), forming succinate and LL-2,6-diaminopimelate (DAP), an intermediate involved in the bacterial biosynthesis of lysine and meso-diaminopimelic acid, an essential component of bacterial cell walls. The chain is Succinyl-diaminopimelate desuccinylase from Nitrosomonas europaea (strain ATCC 19718 / CIP 103999 / KCTC 2705 / NBRC 14298).